Consider the following 373-residue polypeptide: Queuine tRNA-ribosyltransferase (373 aa).

Residue Asp90 is the Proton acceptor of the active site. Residues 90–94 (DSGGF), Asp144, Gln193, and Gly220 each bind substrate. Residues 251-257 (GVGTPED) are RNA binding. Catalysis depends on Asp270, which acts as the Nucleophile. Residues 275 to 279 (TRNAR) are RNA binding; important for wobble base 34 recognition. Zn(2+)-binding residues include Cys308, Cys310, Cys313, and His339.

This sequence belongs to the queuine tRNA-ribosyltransferase family. In terms of assembly, homodimer. Within each dimer, one monomer is responsible for RNA recognition and catalysis, while the other monomer binds to the replacement base PreQ1. Requires Zn(2+) as cofactor.

It catalyses the reaction 7-aminomethyl-7-carbaguanine + guanosine(34) in tRNA = 7-aminomethyl-7-carbaguanosine(34) in tRNA + guanine. Its pathway is tRNA modification; tRNA-queuosine biosynthesis. Catalyzes the base-exchange of a guanine (G) residue with the queuine precursor 7-aminomethyl-7-deazaguanine (PreQ1) at position 34 (anticodon wobble position) in tRNAs with GU(N) anticodons (tRNA-Asp, -Asn, -His and -Tyr). Catalysis occurs through a double-displacement mechanism. The nucleophile active site attacks the C1' of nucleotide 34 to detach the guanine base from the RNA, forming a covalent enzyme-RNA intermediate. The proton acceptor active site deprotonates the incoming PreQ1, allowing a nucleophilic attack on the C1' of the ribose to form the product. After dissociation, two additional enzymatic reactions on the tRNA convert PreQ1 to queuine (Q), resulting in the hypermodified nucleoside queuosine (7-(((4,5-cis-dihydroxy-2-cyclopenten-1-yl)amino)methyl)-7-deazaguanosine). The protein is Queuine tRNA-ribosyltransferase of Campylobacter jejuni subsp. jejuni serotype O:23/36 (strain 81-176).